Reading from the N-terminus, the 85-residue chain is Large ribosomal subunit protein eL43 (85 aa).

The segment at 38–59 (CPVCGRKAVRRISTGIWQCQKC) adopts a C4-type zinc-finger fold.

Belongs to the eukaryotic ribosomal protein eL43 family. Zn(2+) is required as a cofactor.

In Thermococcus sibiricus (strain DSM 12597 / MM 739), this protein is Large ribosomal subunit protein eL43.